The primary structure comprises 420 residues: Glucose-1-phosphate adenylyltransferase (420 aa).

Alpha-D-glucose 1-phosphate-binding positions include Tyr107, Gly173, 188–189, and Ser206; that span reads EK.

The protein belongs to the bacterial/plant glucose-1-phosphate adenylyltransferase family. Homotetramer.

The enzyme catalyses alpha-D-glucose 1-phosphate + ATP + H(+) = ADP-alpha-D-glucose + diphosphate. Its pathway is glycan biosynthesis; glycogen biosynthesis. In terms of biological role, involved in the biosynthesis of ADP-glucose, a building block required for the elongation reactions to produce glycogen. Catalyzes the reaction between ATP and alpha-D-glucose 1-phosphate (G1P) to produce pyrophosphate and ADP-Glc. This chain is Glucose-1-phosphate adenylyltransferase, found in Shewanella sp. (strain W3-18-1).